Reading from the N-terminus, the 92-residue chain is Putative membrane protein insertion efficiency factor (92 aa).

The protein belongs to the UPF0161 family.

The protein resides in the cell membrane. Functionally, could be involved in insertion of integral membrane proteins into the membrane. In Tropheryma whipplei (strain TW08/27) (Whipple's bacillus), this protein is Putative membrane protein insertion efficiency factor.